Reading from the N-terminus, the 296-residue chain is 4-hydroxybenzoate octaprenyltransferase (296 aa).

8 consecutive transmembrane segments (helical) span residues 28–48 (IGTL…SDGI), 51–71 (LAVL…GCVI), 102–122 (LLLT…LNHL), 143–163 (FFPI…PMAF), 174–194 (AWIL…VYAM), 212–232 (FGRY…LLMA), 233–253 (VLGA…IVLL), and 274–294 (FLAN…HTFF).

This sequence belongs to the UbiA prenyltransferase family. Mg(2+) is required as a cofactor.

The protein localises to the cell inner membrane. It carries out the reaction all-trans-octaprenyl diphosphate + 4-hydroxybenzoate = 4-hydroxy-3-(all-trans-octaprenyl)benzoate + diphosphate. It functions in the pathway cofactor biosynthesis; ubiquinone biosynthesis. In terms of biological role, catalyzes the prenylation of para-hydroxybenzoate (PHB) with an all-trans polyprenyl group. Mediates the second step in the final reaction sequence of ubiquinone-8 (UQ-8) biosynthesis, which is the condensation of the polyisoprenoid side chain with PHB, generating the first membrane-bound Q intermediate 3-octaprenyl-4-hydroxybenzoate. The protein is 4-hydroxybenzoate octaprenyltransferase of Neisseria meningitidis serogroup B (strain ATCC BAA-335 / MC58).